The primary structure comprises 372 residues: N-methyl-L-tryptophan oxidase (372 aa).

Residue 4 to 34 (DLIIIGSGSVGAAAGYYATRAGLNVLMTDAH) coordinates FAD. Cys308 carries the S-8alpha-FAD cysteine modification.

This sequence belongs to the MSOX/MTOX family. MTOX subfamily. In terms of assembly, monomer. Requires FAD as cofactor.

It carries out the reaction N(alpha)-methyl-L-tryptophan + O2 + H2O = L-tryptophan + formaldehyde + H2O2. In terms of biological role, catalyzes the oxidative demethylation of N-methyl-L-tryptophan. This chain is N-methyl-L-tryptophan oxidase, found in Shigella sonnei (strain Ss046).